The chain runs to 355 residues: Guanine nucleotide-binding protein G(i) subunit alpha-2 (355 aa).

Gly2 carries the N-myristoyl glycine lipid modification. A lipid anchor (S-palmitoyl cysteine) is attached at Cys3. The G-alpha domain maps to Arg32 to Phe355. Positions Lys35–Thr48 are G1 motif. GTP contacts are provided by residues Gly40–Ser47, Leu176–Thr182, Asp201–Gln205, Asn270–Asp273, and Ala327. Ser47 and Thr182 together coordinate Mg(2+). The interval Asp174 to Thr182 is G2 motif. Residues Phe197–Arg206 are G3 motif. The segment at Ile266–Asp273 is G4 motif. Positions Thr325–Thr330 are G5 motif.

The protein belongs to the G-alpha family. G(i/o/t/z) subfamily. G proteins are composed of 3 units; alpha, beta and gamma. The alpha chain contains the guanine nucleotide binding site. In this context, interacts with GNB2. Interacts with UNC5B. Interacts with GPSM1. Interacts with RGS12 and RGS14. Interacts (inactive GDP-bound form) with NUCB1 (via GBA motif); the interaction leads to activation of GNAI3. Interacts (inactive GDP-bound form) with CCDC88C/DAPLE (via GBA motif). Interacts (inactive GDP-bound form) with CCDC8A/GIV (via GBA motif).

Its subcellular location is the cytoplasm. It localises to the cell membrane. It is found in the cytoskeleton. The protein resides in the microtubule organizing center. The protein localises to the centrosome. Its subcellular location is the membrane. In terms of biological role, guanine nucleotide-binding proteins (G proteins) are involved as modulators or transducers in various transmembrane signaling systems. The G(i) proteins are involved in hormonal regulation of adenylate cyclase: they inhibit the cyclase in response to beta-adrenergic stimuli. May play a role in cell division. The polypeptide is Guanine nucleotide-binding protein G(i) subunit alpha-2 (Gnai2) (Rattus norvegicus (Rat)).